Consider the following 118-residue polypeptide: V-type proton ATPase subunit G 2 (118 aa).

A disordered region spans residues alanine 25–arginine 90. Positions glutamine 35–glutamine 56 are enriched in basic and acidic residues. Composition is skewed to polar residues over residues serine 57–leucine 69 and arginine 78–glutamine 89.

The protein belongs to the V-ATPase G subunit family. As to quaternary structure, V-ATPase is a heteromultimeric enzyme made up of two complexes: the ATP-hydrolytic V1 complex and the proton translocation V0 complex. The V1 complex consists of three catalytic AB heterodimers that form a heterohexamer, three peripheral stalks each consisting of EG heterodimers, one central rotor including subunits D and F, and the regulatory subunits C and H. The proton translocation complex V0 consists of the proton transport subunit a, a ring of proteolipid subunits c9c'', rotary subunit d, subunits e and f, and the accessory subunits ATP6AP1/Ac45 and ATP6AP2/PRR. As to expression, brain.

The protein localises to the melanosome. It is found in the cytoplasmic vesicle. Its subcellular location is the clathrin-coated vesicle membrane. Its function is as follows. Subunit of the V1 complex of vacuolar(H+)-ATPase (V-ATPase), a multisubunit enzyme composed of a peripheral complex (V1) that hydrolyzes ATP and a membrane integral complex (V0) that translocates protons. V-ATPase is responsible for acidifying and maintaining the pH of intracellular compartments and in some cell types, is targeted to the plasma membrane, where it is responsible for acidifying the extracellular environment. The chain is V-type proton ATPase subunit G 2 (ATP6V1G2) from Homo sapiens (Human).